Reading from the N-terminus, the 193-residue chain is p53 apoptosis effector related to PMP-22 (193 aa).

4 consecutive transmembrane segments (helical) span residues 12 to 32, 81 to 101, 110 to 130, and 151 to 171; these read RWIL…ALAG, LFCG…ALCG, VIGG…VIYP, and WAYG…FFFC.

It belongs to the TMEM47 family. In terms of tissue distribution, expressed in the stratified squamous skin epithelium of the skin and the tongue, but not in simple epithelia (at protein level). Expressed in the oral epithelium, tongue epithelium and skin (at protein level). More abundant in areas of lower flow stress in the inner curvature compared to the outer curvature regions of the aorta (at protein level). Expressed in luminal cells and myoepithelium cells of the mammary epithelium (at protein level). Expression increases during the early stages of pregnancy before decreasing before birth, expression continues to be weak during involution which mirrors decreased desmosome abundance and organization at these time points (at protein level). Expressed by epithelial cells at the mucosal surface in the proximal colon (at protein level). Expressed in apoptotic cells.

The protein localises to the cell junction. Its subcellular location is the desmosome. It is found in the cell membrane. The protein resides in the cytoplasm. Component of intercellular desmosome junctions. Plays a role in stratified epithelial integrity and cell-cell adhesion by promoting desmosome assembly. Thereby plays a role in barrier function of the skin against infection. Plays a role in mammary epithelial tissue homeostasis and remodeling during and after pregnancy, potentially via its involvement in desmosome cell-cell junctions. Required for tooth enamel development via facilitating desmosome-mediated ameloblast adhesion to the stratum intermedium during the transitional stage of amelogenesis. May also play a role in downstream transcriptional regulation of other genes involved in amelogenesis such as AMBN, ENAM, MMP20 and KLK4. Plays a role as an effector in the TP53-dependent apoptotic pathway. Positively regulates apoptosis in T-helper 17 (Th17) cell populations via caspase-dependent signaling. Promotes neutrophil transepithelial migration in response to chemoattractants such as hepoxilin A3 (HXA3), N-Formylmethionyl-leucyl-phenylalanine (fMLP) and CXCL8/IL-8. May act as a positive regulator of endothelial cell apoptosis in response to blood flow-derived shear stress. This chain is p53 apoptosis effector related to PMP-22, found in Mus musculus (Mouse).